A 295-amino-acid chain; its full sequence is Tyrosine recombinase XerD (295 aa).

The region spanning Met1 to Leu85 is the Core-binding (CB) domain. The Tyr recombinase domain maps to Lys106–Thr289. Catalysis depends on residues Arg146, Lys170, His241, Arg244, and His267. The active-site O-(3'-phospho-DNA)-tyrosine intermediate is the Tyr276.

It belongs to the 'phage' integrase family. XerD subfamily. In terms of assembly, forms a cyclic heterotetrameric complex composed of two molecules of XerC and two molecules of XerD.

It is found in the cytoplasm. In terms of biological role, site-specific tyrosine recombinase, which acts by catalyzing the cutting and rejoining of the recombining DNA molecules. The XerC-XerD complex is essential to convert dimers of the bacterial chromosome into monomers to permit their segregation at cell division. It also contributes to the segregational stability of plasmids. In Staphylococcus epidermidis (strain ATCC 35984 / DSM 28319 / BCRC 17069 / CCUG 31568 / BM 3577 / RP62A), this protein is Tyrosine recombinase XerD.